The primary structure comprises 331 residues: Mycothiol acetyltransferase (331 aa).

Residue Glu33 participates in 1D-myo-inositol 2-(L-cysteinylamino)-2-deoxy-alpha-D-glucopyranoside binding. Over residues 59–86 (HAAEATAGSAASADPADPADPAAPADPA) the composition is skewed to low complexity. Residues 59–89 (HAAEATAGSAASADPADPADPAAPADPADPA) are disordered. Residue 115–120 (RRGHGS) coordinates acetyl-CoA. The N-acetyltransferase domain occupies 183 to 331 (LRLDTFEESR…DVQLRATERG (149 aa)). The 1D-myo-inositol 2-(L-cysteinylamino)-2-deoxy-alpha-D-glucopyranoside site is built by Glu210, Lys249, and Glu261. 265-267 (VAT) is an acetyl-CoA binding site. Residue Tyr299 participates in 1D-myo-inositol 2-(L-cysteinylamino)-2-deoxy-alpha-D-glucopyranoside binding. 304-309 (NAPALR) provides a ligand contact to acetyl-CoA.

Belongs to the acetyltransferase family. MshD subfamily. Monomer.

It carries out the reaction 1D-myo-inositol 2-(L-cysteinylamino)-2-deoxy-alpha-D-glucopyranoside + acetyl-CoA = mycothiol + CoA + H(+). Its function is as follows. Catalyzes the transfer of acetyl from acetyl-CoA to desacetylmycothiol (Cys-GlcN-Ins) to form mycothiol. This Brachybacterium faecium (strain ATCC 43885 / DSM 4810 / JCM 11609 / LMG 19847 / NBRC 14762 / NCIMB 9860 / 6-10) protein is Mycothiol acetyltransferase.